Reading from the N-terminus, the 299-residue chain is Oxygen-dependent coproporphyrinogen-III oxidase (299 aa).

Ser92 lines the substrate pocket. Residues His96 and His106 each coordinate a divalent metal cation. His106 serves as the catalytic Proton donor. 108-110 (NVR) contributes to the substrate binding site. The a divalent metal cation site is built by His145 and His175. The segment at 240–275 (YVEFNLVWDRGTLFGLQTGGRTESILMSMPPLVRWE) is important for dimerization. 258-260 (GGR) contributes to the substrate binding site.

This sequence belongs to the aerobic coproporphyrinogen-III oxidase family. Homodimer. A divalent metal cation serves as cofactor.

The protein resides in the cytoplasm. It catalyses the reaction coproporphyrinogen III + O2 + 2 H(+) = protoporphyrinogen IX + 2 CO2 + 2 H2O. The protein operates within porphyrin-containing compound metabolism; protoporphyrin-IX biosynthesis; protoporphyrinogen-IX from coproporphyrinogen-III (O2 route): step 1/1. In terms of biological role, involved in the heme biosynthesis. Catalyzes the aerobic oxidative decarboxylation of propionate groups of rings A and B of coproporphyrinogen-III to yield the vinyl groups in protoporphyrinogen-IX. The protein is Oxygen-dependent coproporphyrinogen-III oxidase of Salmonella typhi.